A 446-amino-acid chain; its full sequence is MKEKLTHAESLTISSMLFGLFFGAGNLIFPAYLGEASGANLWISLLGFLITGVGLPLLAIASLGMTRSEGLLDLSGRVSHKYSYFFTCLLYLTIGPFFAIPRSFTVPFETGISALLPSGMAKSTGLFIFSLIFFAIMLFFSLRPGQIMDWIGKFLTPAFLLFFFFIMIMALLHPLGNYHAVKPVGEYASAPLISGVLAGYNTMDALAGLAFGIIVISSIRTFGVTKPEKVASATLKTGVLTCLLMAVIYAITALVGAQSRTALGLAANGGEALSQIARHYFPGLGAVIFALMIFVACLKTAIGLITACSETFAEMFPKTLSYNMWAIIFSLLAFGIANVGLTTIISFSLPVLMLLYPLAISLILLALTSKLFDFKQVDYQIMTAVTFLCALGDFFKALPAGMQVKAVTGLYGHVLPLYQDGLGWLVPVTVIFAILAIKGVISKKRA.

A run of 12 helical transmembrane segments spans residues 13–33 (ISSM…PAYL), 41–61 (LWIS…LAIA), 81–101 (KYSY…FAIP), 120–140 (MAKS…MLFF), 154–174 (FLTP…LLHP), 196–216 (VLAG…IIVI), 237–257 (TGVL…LVGA), 285–305 (GAVI…IGLI), 325–345 (WAII…TTII), 347–367 (FSLP…LLAL), 381–401 (IMTA…LPAG), and 421–441 (GLGW…KGVI).

Belongs to the branched chain amino acid transporter family.

Its subcellular location is the cell membrane. Its activity is regulated as follows. Leucine uptake is inhibited by the proton ionophore carbonyl cyanide m-chlorophenylhydrazone (CCCP). Functionally, branched chain amino acid transport system which is involved in the uptake of leucine, valine and isoleucine. The proton motive force is probably the driving force for transport. In Lactobacillus delbrueckii subsp. lactis, this protein is Branched-chain amino acid permease BrnQ.